The sequence spans 67 residues: MIFPMQQLIEFQGNIYEITCAATRRAFQLAAVCDPVLDELGGKVVSAAAQQVFSGTVDYRIEPQELG.

It belongs to the RNA polymerase subunit omega family. As to quaternary structure, the RNAP catalytic core consists of 2 alpha, 1 beta, 1 beta' and 1 omega subunit. When a sigma factor is associated with the core the holoenzyme is formed, which can initiate transcription.

It carries out the reaction RNA(n) + a ribonucleoside 5'-triphosphate = RNA(n+1) + diphosphate. In terms of biological role, promotes RNA polymerase assembly. Latches the N- and C-terminal regions of the beta' subunit thereby facilitating its interaction with the beta and alpha subunits. The sequence is that of DNA-directed RNA polymerase subunit omega (rpoZ) from Treponema pallidum (strain Nichols).